A 474-amino-acid chain; its full sequence is 3-isopropylmalate dehydratase large subunit (474 aa).

Residues Cys-353, Cys-414, and Cys-417 each contribute to the [4Fe-4S] cluster site.

The protein belongs to the aconitase/IPM isomerase family. LeuC type 1 subfamily. Heterodimer of LeuC and LeuD. The cofactor is [4Fe-4S] cluster.

It catalyses the reaction (2R,3S)-3-isopropylmalate = (2S)-2-isopropylmalate. It functions in the pathway amino-acid biosynthesis; L-leucine biosynthesis; L-leucine from 3-methyl-2-oxobutanoate: step 2/4. In terms of biological role, catalyzes the isomerization between 2-isopropylmalate and 3-isopropylmalate, via the formation of 2-isopropylmaleate. The protein is 3-isopropylmalate dehydratase large subunit of Xylella fastidiosa (strain 9a5c).